A 384-amino-acid chain; its full sequence is PqqA peptide cyclase (384 aa).

The Radical SAM core domain maps to 5 to 220 (VGLPLWLLAE…TNEYREKLKA (216 aa)). C19, C23, and C26 together coordinate [4Fe-4S] cluster.

This sequence belongs to the radical SAM superfamily. PqqE family. As to quaternary structure, interacts with PqqD. The interaction is necessary for activity of PqqE. [4Fe-4S] cluster is required as a cofactor.

The catalysed reaction is [PQQ precursor protein] + S-adenosyl-L-methionine = E-Y cross-linked-[PQQ precursor protein] + 5'-deoxyadenosine + L-methionine + H(+). Its pathway is cofactor biosynthesis; pyrroloquinoline quinone biosynthesis. In terms of biological role, catalyzes the cross-linking of a glutamate residue and a tyrosine residue in the PqqA protein as part of the biosynthesis of pyrroloquinoline quinone (PQQ). This chain is PqqA peptide cyclase, found in Acinetobacter baumannii (strain AB0057).